We begin with the raw amino-acid sequence, 145 residues long: Large ribosomal subunit protein uL24 (145 aa).

Positions 108 to 145 (EPIQEEQQKTEETKQEIAPEEVEAKEAQDKQEVKENDQ) are disordered. Residues 113-145 (EQQKTEETKQEIAPEEVEAKEAQDKQEVKENDQ) show a composition bias toward basic and acidic residues.

It belongs to the universal ribosomal protein uL24 family. As to quaternary structure, part of the 50S ribosomal subunit.

Its function is as follows. One of two assembly initiator proteins, it binds directly to the 5'-end of the 23S rRNA, where it nucleates assembly of the 50S subunit. Located at the polypeptide exit tunnel on the outside of the subunit. In Thermoplasma volcanium (strain ATCC 51530 / DSM 4299 / JCM 9571 / NBRC 15438 / GSS1), this protein is Large ribosomal subunit protein uL24 (rpl24).